Reading from the N-terminus, the 371-residue chain is 4-hydroxy-3-methylbut-2-en-1-yl diphosphate synthase (flavodoxin) (371 aa).

Residues Cys272, Cys275, Cys307, and Glu314 each contribute to the [4Fe-4S] cluster site.

The protein belongs to the IspG family. [4Fe-4S] cluster is required as a cofactor.

The enzyme catalyses (2E)-4-hydroxy-3-methylbut-2-enyl diphosphate + oxidized [flavodoxin] + H2O + 2 H(+) = 2-C-methyl-D-erythritol 2,4-cyclic diphosphate + reduced [flavodoxin]. The protein operates within isoprenoid biosynthesis; isopentenyl diphosphate biosynthesis via DXP pathway; isopentenyl diphosphate from 1-deoxy-D-xylulose 5-phosphate: step 5/6. Functionally, converts 2C-methyl-D-erythritol 2,4-cyclodiphosphate (ME-2,4cPP) into 1-hydroxy-2-methyl-2-(E)-butenyl 4-diphosphate. This chain is 4-hydroxy-3-methylbut-2-en-1-yl diphosphate synthase (flavodoxin), found in Pseudomonas paraeruginosa (strain DSM 24068 / PA7) (Pseudomonas aeruginosa (strain PA7)).